Consider the following 152-residue polypeptide: Large ribosomal subunit protein bL9 (152 aa).

It belongs to the bacterial ribosomal protein bL9 family.

Binds to the 23S rRNA. The sequence is that of Large ribosomal subunit protein bL9 from Synechococcus sp. (strain WH7803).